Reading from the N-terminus, the 747-residue chain is Probable type III restriction-modification enzyme HindVI Mod subunit (747 aa).

The tract at residues 267 to 270 (DPPY) is binding of S-adenosyl methionine.

Belongs to the N(4)/N(6)-methyltransferase family. In terms of assembly, homodimer, also forms a functional restriction-competent complex with Res.

It carries out the reaction a 2'-deoxyadenosine in DNA + S-adenosyl-L-methionine = an N(6)-methyl-2'-deoxyadenosine in DNA + S-adenosyl-L-homocysteine + H(+). Functionally, a beta subtype methylase that binds the system-specific DNA recognition site 5'-CGAAT-3' and methylates A-4 (of only 1 strand). DNA restriction requires both the Res and Mod subunits. The protein is Probable type III restriction-modification enzyme HindVI Mod subunit of Haemophilus influenzae (strain ATCC 51907 / DSM 11121 / KW20 / Rd).